Here is a 154-residue protein sequence, read N- to C-terminus: Large ribosomal subunit protein uL30 (154 aa).

The protein belongs to the universal ribosomal protein uL30 family. Part of the 50S ribosomal subunit.

The protein is Large ribosomal subunit protein uL30 of Methanoregula boonei (strain DSM 21154 / JCM 14090 / 6A8).